The chain runs to 485 residues: Tektin-5 (485 aa).

4 coiled-coil regions span residues 113–185, 225–251, 342–385, and 423–443; these read SRLT…EVNC, QQQM…ALER, FNAR…MAKE, and DDTL…LQLL.

It belongs to the tektin family. Microtubule inner protein component of sperm flagellar doublet microtubules. Interacts with TEKT3. In terms of processing, ubiquitinated, leading to its degradation. Deubiquitinated by USP16, promoting its stability.

The protein localises to the cytoplasm. The protein resides in the cytoskeleton. It localises to the flagellum axoneme. Functionally, sperm-specific microtubule inner protein (MIP) part of the dynein-decorated doublet microtubules (DMTs) in flagellar axoneme. Forms an extensive interaction network in different conformations that reinforces the helix bundle composed by other tektin proteins (TEKT1 to TEKT4) and MIPs to anchor the tektin bundle onto the tubulin wall of A-tubule of the sperm flagellum. This Macaca fascicularis (Crab-eating macaque) protein is Tektin-5 (TEKT5).